The sequence spans 662 residues: MSQRVSDQAMAEVIAETRTNSSSRRHGGGDDTPSLPYMHKVGAPPKQTLFQEIKHSFNETFFPDKPFGNFKDQSGSRKFVLGLQYIFPILEWGRHYDLKKFRGDFIAGLTIASLCIPQDLAYAKLANLDPWYGLYSSFVAPLVYAFMGTSRDIAIGPVAVVSLLLGTLLSNEISNTKSHDYLRLAFTATFFAGVTQMLLGVCRLGFLIDFLSHAAIVGFMAGAAITIGLQQLKGLLGIKDFTKNSDIVSVMHSVWSNVHHGWNWETILIGLSFLIFLLITKYIAKKNKKLFWVSAISPMICVIVSTFFVYITRADKRGVTIVKHIKSGVNPSSANEIFFHGKYLGAGVRVGVVAGLVALTEAMAIGRTFAAMKDYSIDGNKEMVAMGTMNIVGSLTSCYVTTGSFSRSAVNYMAGCKTAVSNIVMAIVVLLTLLVITPLFKYTPNAVLASIIIAAVVNLVNIEAMVLLWKIDKFDFVACMGAFFGVIFKSVEIGLLIAVAISFAKILLQVTRPRTAVLGKLPGTSVYRNIQQYPKAEQIPGMLIIRVDSAIYFSNSNYIKERILRWLIDEGAQRTESELPEIQHLIVEMSPVTDIDTSGIHAFEELYKTLQKREVQLMLANPGPVVIEKLHASNLAELIGEDKIFLTVADAVATYGPKTAAF.

The tract at residues 1–35 (MSQRVSDQAMAEVIAETRTNSSSRRHGGGDDTPSL) is disordered. The next 12 helical transmembrane spans lie at 103-123 (GDFI…LAYA), 128-148 (LDPW…AFMG), 153-173 (IAIG…SNEI), 182-202 (LRLA…LGVC), 205-225 (GFLI…GAAI), 264-284 (WETI…KYIA), 291-311 (FWVS…FVYI), 346-366 (AGVR…MAIG), 383-403 (MVAM…VTTG), 420-440 (VSNI…TPLF), 447-467 (VLAS…AMVL), and 481-501 (GAFF…AVAI). Residues 532 to 655 (QYPKAEQIPG…LTVADAVATY (124 aa)) form the STAS domain.

Belongs to the SLC26A/SulP transporter (TC 2.A.53) family.

It is found in the membrane. Functionally, high-affinity H(+)/sulfate cotransporter that mediates the uptake of sulfate by plant roots from low concentrations of sulfate in the soil solution. This chain is High affinity sulfate transporter 2 (ST2), found in Stylosanthes hamata (Caribbean stylo).